The primary structure comprises 449 residues: MDKLFGTDGVRGKANEHPMTAEMALRIGAAVGKYFRRDGSAAHRVVIGKDTRLSGYMFENALTAGLTSTGMNVLLLGPVPTPAVGLLTRSMRADLGVMISASHNPACDNGIKFFGPDGFKLSDQAEEEIEALIASGVDAVEANDIGRAKRIDDGRFRYIERLKTSFPRQRRLDGLKVVIDCANGAAHRVAPEALWELGATVIPVGVSPNGKNINEGCGSTHPQFAADTVVAHGADVGICLDGDADRVILIDETGKVGDGDQFMALMAQRWAERGKLANNALVATVMSNLGLEHFLSDLGLKLERTAVGDRYVVERMRAGGFNLGGEQSGHIVMTDYATTGDGLMAGLQFLAAMTQSEQPASVLLNRFEPVPQLLRNVRFAAGQTPLEDARVKAAIAAAEADLSGKGRLLIRKSGTEPLVRVMAEHEDQTVMEQAVDSVVEAVADAVGGT.

The active-site Phosphoserine intermediate is the Ser102. Residues Ser102, Asp241, Asp243, and Asp245 each contribute to the Mg(2+) site. Ser102 carries the post-translational modification Phosphoserine.

This sequence belongs to the phosphohexose mutase family. Mg(2+) is required as a cofactor. Activated by phosphorylation.

The catalysed reaction is alpha-D-glucosamine 1-phosphate = D-glucosamine 6-phosphate. Functionally, catalyzes the conversion of glucosamine-6-phosphate to glucosamine-1-phosphate. The polypeptide is Phosphoglucosamine mutase (Roseobacter denitrificans (strain ATCC 33942 / OCh 114) (Erythrobacter sp. (strain OCh 114))).